A 714-amino-acid chain; its full sequence is Hormonally up-regulated neu tumor-associated kinase (714 aa).

The segment covering 1–15 has biased composition (low complexity); that stretch reads MPAAAGDGLLGEPAA. The interval 1–26 is disordered; it reads MPAAAGDGLLGEPAAPGGGGGAEDAA. Residues 62–320 form the Protein kinase domain; sequence LIGSRKLGEG…IQQALANRWL (259 aa). Residues 68–76 and Lys-91 each bind ATP; that span reads LGEGSFAKV. Asp-186 (proton acceptor) is an active-site residue. Over residues 437–461 the composition is skewed to basic and acidic residues; that stretch reads KKPKEQEKRGDFLHRPFSKKLDKNL. 3 disordered regions span residues 437 to 471, 518 to 552, and 590 to 615; these read KKPK…SGSL, MEFI…HKED, and ARRN…HTPL. Residues 599-611 show a composition bias toward low complexity; sequence LSPGLPSGSMSPL.

The protein belongs to the protein kinase superfamily. CAMK Ser/Thr protein kinase family. SNF1 subfamily.

It carries out the reaction L-seryl-[protein] + ATP = O-phospho-L-seryl-[protein] + ADP + H(+). The enzyme catalyses L-threonyl-[protein] + ATP = O-phospho-L-threonyl-[protein] + ADP + H(+). The chain is Hormonally up-regulated neu tumor-associated kinase (HUNK) from Homo sapiens (Human).